The chain runs to 246 residues: RNA polymerase sigma-B factor (246 aa).

The Polymerase core binding motif lies at 25 to 38 (DLIQEGNIGLMKAV). Positions 201–220 (LKELGEHFGFSRERARQLEI) form a DNA-binding region, H-T-H motif.

It belongs to the sigma-70 factor family.

In terms of biological role, sigma factors are initiation factors that promote the attachment of RNA polymerase to specific initiation sites and are then released. This sigma factor is essential for late-stage differentiation of M.xanthus. The sequence is that of RNA polymerase sigma-B factor (sigB) from Myxococcus xanthus.